Here is a 302-residue protein sequence, read N- to C-terminus: Enolase-phosphatase E1 (302 aa).

Basic residues predominate over residues 1 to 10 (MSDSRLRRRQ). The segment at 1–25 (MSDSRLRRRQGTAGTDNKRRADGPH) is disordered. The span at 16–25 (DNKRRADGPH) shows a compositional bias: basic and acidic residues. Positions 40 and 42 each coordinate Mg(2+). Substrate-binding positions include 183 to 184 (SS) and Lys217. Asp242 contributes to the Mg(2+) binding site.

This sequence belongs to the HAD-like hydrolase superfamily. MasA/MtnC family. In terms of assembly, monomer. Mg(2+) is required as a cofactor.

Its subcellular location is the cytoplasm. The protein localises to the nucleus. It catalyses the reaction 5-methylsulfanyl-2,3-dioxopentyl phosphate + H2O = 1,2-dihydroxy-5-(methylsulfanyl)pent-1-en-3-one + phosphate. It functions in the pathway amino-acid biosynthesis; L-methionine biosynthesis via salvage pathway; L-methionine from S-methyl-5-thio-alpha-D-ribose 1-phosphate: step 3/6. The protein operates within amino-acid biosynthesis; L-methionine biosynthesis via salvage pathway; L-methionine from S-methyl-5-thio-alpha-D-ribose 1-phosphate: step 4/6. Bifunctional enzyme that catalyzes the enolization of 2,3-diketo-5-methylthiopentyl-1-phosphate (DK-MTP-1-P) into the intermediate 2-hydroxy-3-keto-5-methylthiopentenyl-1-phosphate (HK-MTPenyl-1-P), which is then dephosphorylated to form the acireductone 1,2-dihydroxy-3-keto-5-methylthiopentene (DHK-MTPene). The polypeptide is Enolase-phosphatase E1 (Branchiostoma floridae (Florida lancelet)).